The chain runs to 184 residues: Gremlin-1 (184 aa).

A signal peptide spans 1 to 24 (MVRTLYAIGAVFLLTGFLLPTAEG). The interval 24 to 77 (GRKRNRGSQGAIPPPDKDQPNDSEQMQTQQQSGSRHRERGKGTSMPAEEVLESS) is disordered. Residue asparagine 44 is glycosylated (N-linked (GlcNAc...) asparagine). Over residues 45–56 (DSEQMQTQQQSG) the composition is skewed to polar residues. 4 cysteine pairs are disulfide-bonded: cysteine 94/cysteine 144, cysteine 108/cysteine 158, cysteine 118/cysteine 176, and cysteine 122/cysteine 178. Positions 94-184 (CKTQPLKQTI…ECRCISIDLD (91 aa)) constitute a CTCK domain.

It belongs to the DAN family.

It localises to the secreted. In terms of biological role, cytokine that may play a role in the development of the medial pallium and during optic nerve and pecten development by modulating BMP signaling. This is Gremlin-1 (GREM1) from Gallus gallus (Chicken).